The following is a 228-amino-acid chain: Cytidylate kinase (228 aa).

17–25 (GPTASGKGT) provides a ligand contact to ATP.

It belongs to the cytidylate kinase family. Type 1 subfamily.

The protein resides in the cytoplasm. The enzyme catalyses CMP + ATP = CDP + ADP. It carries out the reaction dCMP + ATP = dCDP + ADP. This Burkholderia thailandensis (strain ATCC 700388 / DSM 13276 / CCUG 48851 / CIP 106301 / E264) protein is Cytidylate kinase.